The following is a 381-amino-acid chain: Pre-mRNA-splicing factor cwf28 (381 aa).

Residues 1–21 (MKRKAVLEAFSDSEDEDEKKL) form a disordered region. Residues S11 and S13 each carry the phosphoserine modification. Residues 104 to 157 (AADNEIVDWKANNSNEKAQNKIATNKESTDILPEEVQLVLNDLNDDVKSANSAN) are a coiled coil. Residues 262 to 381 (LNSQNEHTEV…DRSYRSTRTL (120 aa)) form a disordered region. Over residues 274–285 (KSNSIDNLTPSS) the composition is skewed to polar residues. Phosphoserine is present on residues S275 and S277. Basic and acidic residues-rich tracts occupy residues 287-297 (LFRKRSRDNNL), 306-332 (KHLDYNSRNYNKRDRDPDRTKYREYHS), and 362-375 (SDRYTERENPDRSY).

Belongs to the SPP2 family. As to quaternary structure, belongs to the 40S cdc5-associated complex (or cwf complex), a spliceosome sub-complex reminiscent of a late-stage spliceosome composed of the U2, U5 and U6 snRNAs and at least brr2, cdc5, cwf2/prp3, cwf3/syf1, cwf4/syf3, cwf5/ecm2, spp42/cwf6, cwf7/spf27, cwf8, cwf9, cwf10, cwf11, cwf12, prp45/cwf13, cwf14, cwf15, cwf16, cwf17, cwf18, cwf19, cwf20, cwf21, cwf22, cwf23, cwf24, cwf25, cwf26, cyp7/cwf27, cwf28, cwf29/ist3, lea1, msl1, prp5/cwf1, prp10, prp12/sap130, prp17, prp22, sap61, sap62, sap114, sap145, slu7, smb1, smd1, smd3, smf1, smg1 and syf2.

The protein resides in the nucleus. Involved in spliceosome maturation and the first step of pre-mRNA splicing. This Schizosaccharomyces pombe (strain 972 / ATCC 24843) (Fission yeast) protein is Pre-mRNA-splicing factor cwf28 (cwf28).